We begin with the raw amino-acid sequence, 112 residues long: Thioredoxin-like protein YdfQ (112 aa).

One can recognise a Thioredoxin domain in the interval 1-107 (MKEMTGLHSL…LEQKLKRVYR (107 aa)). Cysteines 32 and 35 form a disulfide.

The polypeptide is Thioredoxin-like protein YdfQ (ydfQ) (Bacillus subtilis (strain 168)).